The chain runs to 1128 residues: Nck-associated protein 1 (1128 aa).

Residues 640-665 (AVNKKSKKQTGKKGEPEREKPGVESM) form a disordered region. The segment covering 651-665 (KKGEPEREKPGVESM) has biased composition (basic and acidic residues). A helical transmembrane segment spans residues 995–1015 (IACLLMVFVAVSMPTLASNVM).

Belongs to the HEM-1/HEM-2 family.

Its subcellular location is the cell membrane. It localises to the cell projection. The protein resides in the lamellipodium membrane. Its function is as follows. Part of the WAVE complex that regulates lamellipodia formation. The WAVE complex regulates actin filament reorganization via its interaction with the Arp2/3 complex. Actin remodeling activity is regulated by RAC1. Plays a role in neural tube closure. In Danio rerio (Zebrafish), this protein is Nck-associated protein 1 (nckap1).